A 130-amino-acid polypeptide reads, in one-letter code: Phosphoribosyl-AMP cyclohydrolase (130 aa).

Asp-77 contacts Mg(2+). Residue Cys-78 coordinates Zn(2+). Positions 79 and 81 each coordinate Mg(2+). Cys-95 and Cys-102 together coordinate Zn(2+).

The protein belongs to the PRA-CH family. Homodimer. Mg(2+) is required as a cofactor. Zn(2+) serves as cofactor.

The protein resides in the cytoplasm. The catalysed reaction is 1-(5-phospho-beta-D-ribosyl)-5'-AMP + H2O = 1-(5-phospho-beta-D-ribosyl)-5-[(5-phospho-beta-D-ribosylamino)methylideneamino]imidazole-4-carboxamide. Its pathway is amino-acid biosynthesis; L-histidine biosynthesis; L-histidine from 5-phospho-alpha-D-ribose 1-diphosphate: step 3/9. Its function is as follows. Catalyzes the hydrolysis of the adenine ring of phosphoribosyl-AMP. This Pseudomonas entomophila (strain L48) protein is Phosphoribosyl-AMP cyclohydrolase.